A 245-amino-acid polypeptide reads, in one-letter code: 1-(5-phosphoribosyl)-5-[(5-phosphoribosylamino)methylideneamino] imidazole-4-carboxamide isomerase (245 aa).

Asp-8 functions as the Proton acceptor in the catalytic mechanism. Asp-129 serves as the catalytic Proton donor.

Belongs to the HisA/HisF family.

It localises to the cytoplasm. It catalyses the reaction 1-(5-phospho-beta-D-ribosyl)-5-[(5-phospho-beta-D-ribosylamino)methylideneamino]imidazole-4-carboxamide = 5-[(5-phospho-1-deoxy-D-ribulos-1-ylimino)methylamino]-1-(5-phospho-beta-D-ribosyl)imidazole-4-carboxamide. It functions in the pathway amino-acid biosynthesis; L-histidine biosynthesis; L-histidine from 5-phospho-alpha-D-ribose 1-diphosphate: step 4/9. The sequence is that of 1-(5-phosphoribosyl)-5-[(5-phosphoribosylamino)methylideneamino] imidazole-4-carboxamide isomerase from Rhodopseudomonas palustris (strain HaA2).